Consider the following 266-residue polypeptide: Transmembrane protein 192 (266 aa).

Topologically, residues 1-46 (MAAAGRLEDSSLDILQSMDDDPLLDTQPLPHHSLQAQFRPRFHPLP) are cytoplasmic. Ser-17 is modified (phosphoserine). Residues 47 to 67 (TVIIANLLLLIHVVFVVLAFL) form a helical membrane-spanning segment. Over 68–89 (TGVPCLYPNPTEDKCPENYTSP) the chain is Lumenal. Residues 90–110 (LKVQTAIILGKLILWILHLLF) traverse the membrane as a helical segment. Over 111–137 (ERYVQYHHRKVRSRGYSQIYRSTRHLK) the chain is Cytoplasmic. A helical transmembrane segment spans residues 138–158 (TLALTIHSSGNTALLLLLCVQ). Over 159-171 (HSFPEPSKLYLEL) the chain is Lumenal. The chain crosses the membrane as a helical span at residues 172-192 (ILAVLALELICSLSCLILYIV). At 193 to 266 (KIRRFNRAKP…LELATQPART (74 aa)) the chain is on the cytoplasmic side. The residue at position 213 (Tyr-213) is a Phosphotyrosine. Phosphoserine occurs at positions 229 and 230.

Belongs to the TMEM192 family. In terms of assembly, homodimer.

It localises to the lysosome membrane. The protein resides in the late endosome. In Mus musculus (Mouse), this protein is Transmembrane protein 192 (Tmem192).